A 233-amino-acid polypeptide reads, in one-letter code: Protein DOUBLE-STRAND BREAK FORMATION (233 aa).

As to quaternary structure, interacts with PRD1; this interaction facilitates a binding to PRD3. Specifically expressed in buds.

In terms of biological role, required for meiotic double-strand break (DSB) formation, the initial event for meiotic recombination. The protein is Protein DOUBLE-STRAND BREAK FORMATION of Arabidopsis thaliana (Mouse-ear cress).